The sequence spans 1122 residues: MTKKKAATNYAERQNLASEDSSGDSVHFKDFIPLQELLKDKNYVPSVENLEKILYNETMFNDQKICSNLLLEALIITLFTTISGKSALRLIQTSSLKERKSWAQSFENNSSSYASIVLSWKDNDILLLKFLRFLLANKTAPLQINRYNLPEYKLPLSFLIVSKITIPSILLNETYNLLKDYLYSITGRIESLISCSSTFDKPALVVRKILKDYNRMIECRNFYFWYSFNAENRVNLTFSDNISLLMENDEGNAGSGLDDSRFDHQKQPREAIMGRTINDQEQIYSFELNQDGTLEIPNVMEHSLLRHELLFKILNLTTVLTPLLELQFSTLCGLVDPLMQPTPNDKHIISIDFLFQLFLGLMSQSIKTSQEHNDHYDWKFYMCFNMQKIIDATMLRLNCFDFDILNSVNNTDNAVHWKTQLHRWLPHGLNTQDLELLYMIDILAVYTIYKLYEKIPIQLNPFLFSLISLWKNLSCVILLALEIDRIEEENGTYETPLMVRATIRGAAALRSVIATVLNGLVKNNDHDFKHESLNTFMSPYGRKLCHGALYADLRSHTASLLALGASIEDVTDLFADLQSGDRFDEDIRYMFDYECEDYDESFSESDHGGLDESVVNPTEKIASGSNNVFFRRRCNCIFNDDKLVAEDGANEAFGSTNSENVEGAMHNNRNAVHNATTATSDHVVTSPNPLSVRSRSTFEFDYSGEDWRDVPRDFNMYYSPSYSFIHEPKLDVIFSLTLRGATEKLNKEESILLVRSVASCVRNEQDQMILADLESNFSASINGDVEGEGNTKMSKIDNEDLRRTTPDDIYEIWSEESAFERMLNVNHDVAWRLMDEMLMCTGYRRILIWFLTHLELKHSLIYYVFELIMGLRGKPFSGEASDQDKKDDMIYEILKKKQKNEDASGLPFSRQGPIVLSDIETKMLLQEFFMNAAIFLSSKNNEEENEDGEKISLYSLGLVRLICYMVQTLIANDKFFFTKSECTFELQTLLMTWIGILPEAKDLFFKIKTRLAMEEEDSADTMQHEGRKNSDIEKKLNAKPASELNLKLLNLFPSKPANKDDSSPINTLRSFIADYSFDTQVNPPGRRVVFYDGKILPLPKADKPIPLHEYITLAELDVGDSE.

A disordered region spans residues 1-24 (MTKKKAATNYAERQNLASEDSSGD). The segment covering 11–24 (AERQNLASEDSSGD) has biased composition (polar residues). At serine 1042 the chain carries Phosphoserine.

In terms of assembly, subunit of the 1.0 MDa CCR4-NOT core complex that contains CCR4, CAF1, NOT1, NOT2, NOT3, NOT4, NOT5, CAF40 and CAF130. In the complex interacts with NOT1. The core complex probably is part of a less characterized 1.9 MDa CCR4-NOT complex.

Its subcellular location is the cytoplasm. The protein localises to the nucleus. Acts as a component of the CCR4-NOT core complex, which in the nucleus seems to be a general transcription factor, and in the cytoplasm the major mRNA deadenylase involved in mRNA turnover. The sequence is that of Protein CAF130 (CAF130) from Saccharomyces cerevisiae (strain ATCC 204508 / S288c) (Baker's yeast).